A 307-amino-acid chain; its full sequence is Ubiquitin recognition factor in ER-associated degradation protein 1 (307 aa).

N-acetylmethionine is present on Met1. Phosphoserine occurs at positions 129, 231, 245, 247, and 299. Disordered stretches follow at residues 230–255 and 282–307; these read GSGN…GDIK and EEDE…GRKP.

It belongs to the UFD1 family. Interacts with USP13. Heterodimer with NPLOC4, this heterodimer binds VCP and inhibits Golgi membrane fusion. Interacts with ZFAND2B; probably through VCP.

It localises to the nucleus. The protein resides in the cytoplasm. Its subcellular location is the cytosol. It participates in protein degradation; proteasomal ubiquitin-dependent pathway. In terms of biological role, essential component of the ubiquitin-dependent proteolytic pathway which degrades ubiquitin fusion proteins. The ternary complex containing UFD1, VCP and NPLOC4 binds ubiquitinated proteins and is necessary for the export of misfolded proteins from the ER to the cytoplasm, where they are degraded by the proteasome. The NPLOC4-UFD1-VCP complex regulates spindle disassembly at the end of mitosis and is necessary for the formation of a closed nuclear envelope. It may be involved in the development of some ectoderm-derived structures. Acts as a negative regulator of type I interferon production via the complex formed with VCP and NPLOC4, which binds to RIGI and recruits RNF125 to promote ubiquitination and degradation of RIGI. The sequence is that of Ubiquitin recognition factor in ER-associated degradation protein 1 from Rattus norvegicus (Rat).